We begin with the raw amino-acid sequence, 562 residues long: NAD-dependent malic enzyme (562 aa).

Tyrosine 101 serves as the catalytic Proton donor. Arginine 154 contacts NAD(+). The active-site Proton acceptor is lysine 172. Glutamate 243, aspartate 244, and aspartate 267 together coordinate a divalent metal cation. NAD(+) contacts are provided by aspartate 267 and asparagine 415.

The protein belongs to the malic enzymes family. In terms of assembly, homotetramer. The cofactor is Mg(2+). Requires Mn(2+) as cofactor.

It carries out the reaction (S)-malate + NAD(+) = pyruvate + CO2 + NADH. The enzyme catalyses oxaloacetate + H(+) = pyruvate + CO2. This is NAD-dependent malic enzyme from Shewanella pealeana (strain ATCC 700345 / ANG-SQ1).